The chain runs to 107 residues: Prokineticin-2 (107 aa).

The signal sequence occupies residues 1 to 26 (MEDPRCAPLLLLLLLPLLLTPPAGDA). Intrachain disulfides connect C33–C45, C39–C57, C44–C85, C67–C93, and C87–C103.

This sequence belongs to the AVIT (prokineticin) family. As to expression, expressed at high levels in testis and at lower levels in brain, lung, ovary, spleen, thymus and uterus.

The protein localises to the secreted. May function as an output molecule from the suprachiasmatic nucleus (SCN) that transmits behavioral circadian rhythm. May also function locally within the SCN to synchronize output. Potently contracts gastrointestinal (GI) smooth muscle. This is Prokineticin-2 (Prok2) from Rattus norvegicus (Rat).